We begin with the raw amino-acid sequence, 399 residues long: RNA polymerase sigma factor SigA1 (399 aa).

Residues 1–73 (MTQLISIDKE…DEDSVGEDED (73 aa)) are disordered. Residues 60–73 (DAIDDEDSVGEDED) show a composition bias toward acidic residues. The tract at residues 167–237 (MVQSNLRLVV…TRAIADQSRT (71 aa)) is sigma-70 factor domain-2. Positions 191 to 194 (DLIQ) match the Interaction with polymerase core subunit RpoC motif. A sigma-70 factor domain-3 region spans residues 246–321 (ETISRIKKTT…EADGETPEDE (76 aa)). Positions 334 to 387 (VLSTLSPRERDVLRLRYGLDDGRMKTLEEIGQLFNVTRERIRQIEAKALRKLRH) are sigma-70 factor domain-4. Residues 360–379 (LEEIGQLFNVTRERIRQIEA) constitute a DNA-binding region (H-T-H motif).

It belongs to the sigma-70 factor family. RpoD/SigA subfamily. Interacts transiently with the RNA polymerase catalytic core.

It localises to the cytoplasm. Functionally, sigma factors are initiation factors that promote the attachment of RNA polymerase to specific initiation sites and are then released. This sigma factor is the primary sigma factor during exponential growth. The sequence is that of RNA polymerase sigma factor SigA1 from Synechococcus elongatus (strain ATCC 33912 / PCC 7942 / FACHB-805) (Anacystis nidulans R2).